The following is a 505-amino-acid chain: Protein nucleotidyltransferase YdiU (505 aa).

ATP-binding residues include glycine 102, glycine 104, arginine 105, lysine 125, aspartate 137, glycine 138, arginine 188, and arginine 195. Catalysis depends on aspartate 264, which acts as the Proton acceptor. The Mg(2+) site is built by asparagine 265 and aspartate 274. Aspartate 274 is an ATP binding site. The disordered stretch occupies residues 485–505 (FADYGKPPAPGEEVQQTFCGT).

The protein belongs to the SELO family. Mg(2+) serves as cofactor. The cofactor is Mn(2+).

The enzyme catalyses L-seryl-[protein] + ATP = 3-O-(5'-adenylyl)-L-seryl-[protein] + diphosphate. The catalysed reaction is L-threonyl-[protein] + ATP = 3-O-(5'-adenylyl)-L-threonyl-[protein] + diphosphate. It catalyses the reaction L-tyrosyl-[protein] + ATP = O-(5'-adenylyl)-L-tyrosyl-[protein] + diphosphate. It carries out the reaction L-histidyl-[protein] + UTP = N(tele)-(5'-uridylyl)-L-histidyl-[protein] + diphosphate. The enzyme catalyses L-seryl-[protein] + UTP = O-(5'-uridylyl)-L-seryl-[protein] + diphosphate. The catalysed reaction is L-tyrosyl-[protein] + UTP = O-(5'-uridylyl)-L-tyrosyl-[protein] + diphosphate. Functionally, nucleotidyltransferase involved in the post-translational modification of proteins. It can catalyze the addition of adenosine monophosphate (AMP) or uridine monophosphate (UMP) to a protein, resulting in modifications known as AMPylation and UMPylation. This chain is Protein nucleotidyltransferase YdiU, found in Nitrobacter hamburgensis (strain DSM 10229 / NCIMB 13809 / X14).